The sequence spans 535 residues: Nuclear/nucleolar GTPase 2 (535 aa).

The tract at residues 1–42 (MAKKKERAVNVSGKPRHSLDVNRANDKKGAGGGAGGGGGGRS) is disordered. Residues 17-29 (HSLDVNRANDKKG) show a composition bias toward basic and acidic residues. Gly residues predominate over residues 30–41 (AGGGAGGGGGGR). The CP-type G domain maps to 213 to 374 (WGELYKVIDS…LIDCPGVVYQ (162 aa)). Residues 261-264 (NKCD) form a G4 region. The tract at residues 290-292 (SIN) is G5. Residues 323-330 (GYPNVGKS) are G1. Residues 349 to 353 (GETKV) are G2. Residues 367-370 (DCPG) form a G3 region. The tract at residues 464–495 (FFVPPPQQGEDSPSETAEPVDKSDEEGVSSDR) is disordered.

It belongs to the TRAFAC class YlqF/YawG GTPase family. RsgA subfamily.

Its subcellular location is the nucleus. The protein resides in the nucleolus. GTPase involved in pre-60S ribosomal subunit maturation. The polypeptide is Nuclear/nucleolar GTPase 2 (Oryza sativa subsp. indica (Rice)).